The sequence spans 470 residues: Dendritic cell-specific transmembrane protein (470 aa).

The Cytoplasmic segment spans residues 1 to 34; the sequence is MGIWTSGTDIFLSLWEIYVSPRSPGWMDFIQHLG. The helical transmembrane segment at 35-55 threads the bilayer; the sequence is VCCLVALISVGLLSVAACWFL. The Extracellular segment spans residues 56 to 57; sequence PS. A helical transmembrane segment spans residues 58 to 78; it reads IIAAAASWIITCVLLCCSKHA. At 79–97 the chain is on the cytoplasmic side; the sequence is RCFILLVFLSCGLREGRNA. Residues 98-118 traverse the membrane as a helical segment; it reads LIAAGTGIVILGHVENIFHNF. Topologically, residues 119-209 are extracellular; it reads KGLLDGMTCN…MATTTEVLSS (91 aa). The helical transmembrane segment at 210–230 threads the bilayer; the sequence is LGQKLLAFAGLSLVLLGTGLF. At 231 to 292 the chain is on the cytoplasmic side; the sequence is MKRFLGPCGW…FWPTPKERKN (62 aa). A helical transmembrane segment spans residues 293-313; sequence LGLFFLPILIHLCIWVLFAAV. The Extracellular segment spans residues 314–376; the sequence is DYLLYRLIFS…PKPKFLLSET (63 aa). The chain crosses the membrane as a helical span at residues 377–397; that stretch reads WVPLSVILLILVMLGLLSSIL. Over 398–470 the chain is Cytoplasmic; the sequence is MQLKILVSAS…QMDMASADKS (73 aa).

As to quaternary structure, monomer. Homodimer. Isoform 1 interacts (via the C-terminus cytoplasmic tail) with OS9 isoform 1 (via the C-terminus tail); the interaction induces DCSTAMP redistribution to the endoplasmic reticulum-Golgi intermediate compartment. Isoform 1 interacts (via the C-terminus cytoplasmic tail) with OS9 isoform 2 (via the C-terminus tail). Interacts with CREB3. In terms of processing, glycosylated. Preferentially expressed by dendritic cells (DCs). Detected in both immature and mature DCs. Highly expressed in lymph nodes, lung, kidney and liver. Expressed at lower levels in pancreas, bone marrow, spleen, leukocytes, in freshly isolated peripheral blood mononuclear cells (PBMC) and B-cells. Not expressed in freshly isolated monocytes.

It localises to the cell membrane. Its subcellular location is the endoplasmic reticulum membrane. The protein resides in the endoplasmic reticulum-Golgi intermediate compartment membrane. The protein localises to the endosome. Functionally, probable cell surface receptor that plays several roles in cellular fusion, cell differentiation, bone and immune homeostasis. Plays a role in TNFSF11-mediated osteoclastogenesis. Cooperates with OCSTAMP in modulating cell-cell fusion in both osteoclasts and foreign body giant cells (FBGCs). Participates in osteoclast bone resorption. Involved in inducing the expression of tartrate-resistant acid phosphatase in osteoclast precursors. Plays a role in haematopoietic stem cell differentiation of bone marrow cells toward the myeloid lineage. Inhibits the development of neutrophilic granulocytes. Plays also a role in the regulation of dendritic cell (DC) antigen presentation activity by controlling phagocytic activity. Involved in the maintenance of immune self-tolerance and avoidance of autoimmune reactions. This chain is Dendritic cell-specific transmembrane protein (DCSTAMP), found in Homo sapiens (Human).